A 1111-amino-acid chain; its full sequence is NBPF family member NBPF9 (1111 aa).

The stretch at 70-130 (MLRNERQFKE…RSLNEHLQAL (61 aa)) forms a coiled coil. Positions 161-198 (KLSPENDEDEDEDVQVEEDEKVLESSAPREVQKAEESK) are disordered. Residues 165 to 181 (ENDEDEDEDVQVEEDEK) are compositionally biased toward acidic residues. Residues 165-259 (ENDEDEDEDV…ECQDALNILP (95 aa)) form the Olduvai 1 domain. The stretch at 341–401 (MLRNERQFKE…RSLNEHLQAL (61 aa)) forms a coiled coil. Olduvai domains follow at residues 436–528 (ENDN…HIIP), 529–600 (ENES…VDIG), 601–692 (RHRW…PSCP), 695–750 (SREL…LDLD), 751–843 (RIKK…RSKK), 844–919 (KRRR…LDVD), 920–1012 (RIKK…RSKK), and 1013–1111 (ERRR…IFPQ). Disordered stretches follow at residues 451–474 (EKVQKSSAPREMQKAEEKEVPEDS) and 510–569 (TLIG…STPS). 2 stretches are compositionally biased toward acidic residues: residues 530 to 539 (NESDDEEEEE) and 550 to 562 (ESEEEEVPQESWD). Disordered regions lie at residues 829 to 871 (KKGK…LDEK) and 999 to 1033 (KGKGKKRRGRRSKKERRRGRKEGEEDQNPPCPRLN). Basic residues-rich tracts occupy residues 831-849 (GKGKKRRGRRSKKKRRRGR) and 1000-1018 (GKGKKRRGRRSKKERRRGR).

This sequence belongs to the NBPF family. In terms of tissue distribution, expressed in a neuroblastoma cell line.

It localises to the cytoplasm. The chain is NBPF family member NBPF9 from Homo sapiens (Human).